The sequence spans 362 residues: Chemerin-like receptor 1 (362 aa).

Residues 1-37 (MEAEDYNASYEDYPDDVDPIVVLEELSPLEGRVVRIL) lie on the Extracellular side of the membrane. N-linked (GlcNAc...) asparagine glycosylation is present at asparagine 7. Residues 38 to 58 (LVAVYSVICLLGILGNGLVIV) form a helical membrane-spanning segment. At 59-70 (MITCKMKRTVNT) the chain is on the cytoplasmic side. A helical membrane pass occupies residues 71–91 (VWFLNLAVADFLFNVFLPVHI). Topologically, residues 92-108 (AYAALDYHWVFGTAMCK) are extracellular. Cysteine 107 and cysteine 184 are joined by a disulfide. A helical transmembrane segment spans residues 109–129 (ISNFLLIHNMFTSVFLLTVIS). At 130 to 151 (FDRCVSVLLPVWSQNHRSVRLA) the chain is on the cytoplasmic side. A helical membrane pass occupies residues 152-172 (YTACLVIWVLAFFLSSPSLVF). At 173–219 (RDTARLHGKISCFNNFSLSAAVSSPWPAHPQVDPVGSGRHKVVTITR) the chain is on the extracellular side. A glycan (N-linked (GlcNAc...) asparagine) is linked at asparagine 187. Residues 220-240 (FLCGFLVPGLITTACYLTIVY) traverse the membrane as a helical segment. Residues 241-255 (KLQRSRLAKTKKPFK) are Cytoplasmic-facing. Residues 256–276 (IILTIIVTFFLCWCPYHAFYL) traverse the membrane as a helical segment. Over 277 to 281 (LELRR) the chain is Extracellular. The helical transmembrane segment at 282 to 302 (GSVPPSVFSLGVPLATAIAIA) threads the bilayer. Over 303–362 (NSCMNPILYVFMGQDFKKFRVALFSRLVNALSEDTGHSSYPSHRSFTKMSSMNERETGML) the chain is Cytoplasmic. A Phosphoserine modification is found at serine 334. The interval 336–362 (DTGHSSYPSHRSFTKMSSMNERETGML) is disordered. Threonine 337 is subject to Phosphothreonine. The segment covering 339-354 (HSSYPSHRSFTKMSSM) has biased composition (polar residues). 3 positions are modified to phosphoserine: serine 344, serine 347, and serine 353.

It belongs to the chemokine-like receptor (CMKLR) family. In terms of tissue distribution, widely expressed in several tissues including adipose, muscle, liver and brain.

Its subcellular location is the cell membrane. Functionally, receptor for the chemoattractant adipokine chemerin/RARRES2 and for the omega-3 fatty acid derived molecule resolvin E1. Interaction with RARRES2 initiates activation of G proteins G(i)/G(o) and beta-arrestin pathways inducing cellular responses via second messenger pathways such as intracellular calcium mobilization, phosphorylation of MAP kinases MAPK1/MAPK3 (ERK1/2), TYRO3, MAPK14/P38MAPK and PI3K leading to multifunctional effects, like, reduction of immune responses, enhancing of adipogenesis and angionesis. Resolvin E1 down-regulates cytokine production in macrophages by reducing the activation of MAPK1/3 (ERK1/2) and NF-kappa-B. Positively regulates adipogenesis and adipocyte metabolism. This chain is Chemerin-like receptor 1 (CMLKR1), found in Bos taurus (Bovine).